A 449-amino-acid polypeptide reads, in one-letter code: Cyclin-B1-5 (449 aa).

Disordered stretches follow at residues 1 to 37 (MATR…AGRP) and 98 to 147 (PARK…GGSA). 2 stretches are compositionally biased toward low complexity: residues 8 to 37 (AAAA…AGRP) and 136 to 147 (SEGAGSSSGGSA).

Belongs to the cyclin family. Cyclin AB subfamily.

This is Cyclin-B1-5 (CYCB1-5) from Oryza sativa subsp. japonica (Rice).